Here is a 445-residue protein sequence, read N- to C-terminus: Phosphoglucosamine mutase (445 aa).

The active-site Phosphoserine intermediate is the Ser102. The Mg(2+) site is built by Ser102, Asp241, Asp243, and Asp245. At Ser102 the chain carries Phosphoserine.

It belongs to the phosphohexose mutase family. Requires Mg(2+) as cofactor. Post-translationally, activated by phosphorylation.

The catalysed reaction is alpha-D-glucosamine 1-phosphate = D-glucosamine 6-phosphate. Functionally, catalyzes the conversion of glucosamine-6-phosphate to glucosamine-1-phosphate. In Rhodococcus jostii (strain RHA1), this protein is Phosphoglucosamine mutase.